The primary structure comprises 47 residues: Lysis protein for colicin E8 (47 aa).

Positions 1–19 are cleaved as a signal peptide; it reads MKKITGIILLLLAVIILAA. A lipid anchor (N-palmitoyl cysteine) is attached at C20. C20 is lipidated: S-diacylglycerol cysteine.

The protein localises to the cell outer membrane. Its function is as follows. Lysis proteins are required for both colicin release and partial cell lysis. This Escherichia coli protein is Lysis protein for colicin E8 (lys).